A 218-amino-acid polypeptide reads, in one-letter code: Capsid protein (218 aa).

Met-1 carries the N-acetylmethionine; by host modification. The tract at residues 1–30 is disordered; it reads MDKSGSPNASRTSRRRRPRRGSRSASGADA. Residues 12–22 are compositionally biased toward basic residues; the sequence is TSRRRRPRRGS.

Belongs to the cucumovirus capsid protein family.

Its subcellular location is the virion. Capsid protein. Probably binds RNA and plays a role in packaging. The sequence is that of Capsid protein from Cucumber mosaic virus (strain Q) (CMV).